The primary structure comprises 130 residues: Small ribosomal subunit protein uS11c (130 aa).

The protein belongs to the universal ribosomal protein uS11 family. In terms of assembly, part of the 30S ribosomal subunit.

It localises to the plastid. Its subcellular location is the chloroplast. This chain is Small ribosomal subunit protein uS11c, found in Bigelowiella natans (Pedinomonas minutissima).